A 336-amino-acid chain; its full sequence is Fructose-1,6-bisphosphatase class 1 (336 aa).

Mg(2+) contacts are provided by Glu90, Asp112, Leu114, and Asp115. Substrate-binding positions include 115–118 (DGSS), Asn211, and Lys277. Position 283 (Glu283) interacts with Mg(2+).

Belongs to the FBPase class 1 family. Homotetramer. It depends on Mg(2+) as a cofactor.

It is found in the cytoplasm. The catalysed reaction is beta-D-fructose 1,6-bisphosphate + H2O = beta-D-fructose 6-phosphate + phosphate. The protein operates within carbohydrate biosynthesis; gluconeogenesis. This is Fructose-1,6-bisphosphatase class 1 from Pseudomonas syringae pv. syringae (strain B728a).